Here is a 109-residue protein sequence, read N- to C-terminus: Urocortin-2 (109 aa).

An N-terminal signal peptide occupies residues 1-22; that stretch reads MTRWALVVFMVLMLDRVPGTPI. The propeptide occupies 23–67; that stretch reads PTFQLLPQNYPETTPSSVSSESPSDTTTGPSASWSNSKASPYLDT. Residues 24–60 form a disordered region; that stretch reads TFQLLPQNYPETTPSSVSSESPSDTTTGPSASWSNSK. Positions 33–50 are enriched in low complexity; it reads PETTPSSVSSESPSDTTT. The span at 51-60 shows a compositional bias: polar residues; that stretch reads GPSASWSNSK. Residue valine 106 is modified to Valine amide; partial.

This sequence belongs to the sauvagine/corticotropin-releasing factor/urotensin I family. As to quaternary structure, binds with high affinity to CRF receptors 2-alpha and 2-beta. Post-translationally, glycosylated.

The protein resides in the secreted. Its function is as follows. Suppresses food intake, delays gastric emptying and decreases heat-induced edema. Might represent an endogenous ligand for maintaining homeostasis after stress. This Rattus norvegicus (Rat) protein is Urocortin-2 (Ucn2).